The chain runs to 323 residues: MCSTRKTSVMDEKVIENEEIHFQENSNGFSADLTIHQDKLKQISKTGLNLEKEHIFNMPSSLTKAFKTAFKRKNEIFYCVSTKEMSVDIKDVSGQVYLPLITKQEIQQKLMKIDPSVRSKISMIHLGAVKILLTAQFRQGIDTSVKMALIDDRIVNRKDSLLGAARGNLAYGKFMFTVYPKFALSLQSKNLDKTLSFIHQFERKDLMKTGDKVFTVTYLIGYALTNSHHSIEYRKNSNIEIEEVFKDIGQIEESPFCDISPIDENWTMDIARNKKSIATGSSSRRNFRIDESLLENKDENLLRSMSTKIDTLGKKLSLIYDNE.

The stretch at Ser292–Asn322 forms a coiled coil.

This sequence belongs to the caulimoviridae movement protein family. Homotrimer, through the coiled-coil domain. Interacts with VAP.

The protein localises to the host cell junction. The protein resides in the host plasmodesma. Functionally, transports viral genome to neighboring plant cells directly through plasmosdesmata, without any budding. The movement protein allows efficient cell to cell propagation, by bypassing the host cell wall barrier. Acts by forming tubules structures that increase the size exclusion limit (SEL) of plasmodesmata, thereby allowing viral ribonucleocapsids to spread directly to neighboring cells. This Figwort mosaic virus (strain DxS) (FMV) protein is Movement protein.